Reading from the N-terminus, the 225-residue chain is MEKLLWCSLVMIGFSQAFAQKDMSKTAFVFPKESANSYVSLEAQSKKTLKAFTVCLHIFTELSTTRSFSIFSYATKNSPNEILIFWSKDRGYAFGVGGPEVLFKASEIPEVPTHICASWESATGIAELWVDGKPKVRKILQKGYTVGTDASIILGQEQDSYGGGFDANQSLVGDIGDVNMWDIVLSPEQINTVCVGGTLDPSVLNWQALKYKVQGDVFIKPQLWP.

The first 19 residues, 1–19 (MEKLLWCSLVMIGFSQAFA), serve as a signal peptide directing secretion. Position 20 is a pyrrolidone carboxylic acid (glutamine 20). A Pentraxin (PTX) domain is found at 24 to 225 (SKTAFVFPKE…DVFIKPQLWP (202 aa)). Cysteine 55 and cysteine 116 are joined by a disulfide. Positions 80, 157, 158, 159, and 169 each coordinate Ca(2+).

This sequence belongs to the pentraxin family. In terms of assembly, homopentamer. Pentraxin (or pentaxin) have a discoid arrangement of 5 non-covalently bound subunits. Interacts with FCN1; may regulate monocyte activation by FCN1. The cofactor is Ca(2+). Found in plasma.

Its subcellular location is the secreted. Functionally, displays several functions associated with host defense: it promotes agglutination, bacterial capsular swelling, phagocytosis and complement fixation through its calcium-dependent binding to phosphorylcholine. Can interact with DNA and histones and may scavenge nuclear material released from damaged circulating cells. The sequence is that of C-reactive protein (CRP) from Mesocricetus auratus (Golden hamster).